We begin with the raw amino-acid sequence, 332 residues long: Phosphate acyltransferase (332 aa).

Belongs to the PlsX family. Homodimer. Probably interacts with PlsY.

The protein localises to the cytoplasm. It carries out the reaction a fatty acyl-[ACP] + phosphate = an acyl phosphate + holo-[ACP]. It functions in the pathway lipid metabolism; phospholipid metabolism. Catalyzes the reversible formation of acyl-phosphate (acyl-PO(4)) from acyl-[acyl-carrier-protein] (acyl-ACP). This enzyme utilizes acyl-ACP as fatty acyl donor, but not acyl-CoA. In Thermoanaerobacter pseudethanolicus (strain ATCC 33223 / 39E) (Clostridium thermohydrosulfuricum), this protein is Phosphate acyltransferase.